We begin with the raw amino-acid sequence, 148 residues long: UPF0179 protein UNCMA_27840 (148 aa).

Belongs to the UPF0179 family.

The protein is UPF0179 protein UNCMA_27840 of Methanocella arvoryzae (strain DSM 22066 / NBRC 105507 / MRE50).